Here is a 195-residue protein sequence, read N- to C-terminus: Dephospho-CoA kinase (195 aa).

Positions 3 to 195 constitute a DPCK domain; the sequence is IVGLTGGIGS…IALHENYLNH (193 aa). Residue 11 to 16 participates in ATP binding; the sequence is GSGKSA.

The protein belongs to the CoaE family.

The protein localises to the cytoplasm. It catalyses the reaction 3'-dephospho-CoA + ATP = ADP + CoA + H(+). It participates in cofactor biosynthesis; coenzyme A biosynthesis; CoA from (R)-pantothenate: step 5/5. In terms of biological role, catalyzes the phosphorylation of the 3'-hydroxyl group of dephosphocoenzyme A to form coenzyme A. This chain is Dephospho-CoA kinase, found in Acinetobacter baylyi (strain ATCC 33305 / BD413 / ADP1).